We begin with the raw amino-acid sequence, 2144 residues long: HEAT repeat-containing protein 1 (2144 aa).

An N-acetylmethionine modification is found at Met-1. At Thr-2 the chain carries N-acetylthreonine; in HEAT repeat-containing protein 1, N-terminally processed. Ser-516 bears the Phosphoserine mark. The stretch at 913-951 (ASISSPVVTSLLINLGSPVKEVRRAAIQCLQALSGVASP) is one HEAT 1 repeat. The interval 1170-1191 (KAKPLGTVQQKRRQKMQQKKSQ) is disordered. Phosphoserine is present on Ser-1190. The stretch at 1347-1385 (NKTVKMVIPALIQSDSGDSIEVSRNVEEIVVKIISVFVD) is one HEAT 2 repeat. Ser-1492 is modified (phosphoserine). HEAT repeat units lie at residues 1594–1632 (LLPTETFIPVIRGLVGNPLPSVRRKALDLLNNKLQQNIS), 1730–1770 (IPQL…VVET), and 2100–2138 (IVLLPESIPFLAELMEDECEEVEHQCQKTIQQLETVLGE).

It belongs to the HEATR1/UTP10 family. Part of the small subunit (SSU) processome, composed of more than 70 proteins and the RNA chaperone small nucleolar RNA (snoRNA) U3. Interacts with MYC; the interaction is required for localization of MYC to the nucleolus.

The protein localises to the nucleus. Its subcellular location is the nucleolus. In terms of biological role, ribosome biogenesis factor; required for recruitment of Myc to nucleoli. Involved in nucleolar processing of pre-18S ribosomal RNA. Required for optimal pre-ribosomal RNA transcription by RNA polymerase I. Part of the small subunit (SSU) processome, first precursor of the small eukaryotic ribosomal subunit. During the assembly of the SSU processome in the nucleolus, many ribosome biogenesis factors, an RNA chaperone and ribosomal proteins associate with the nascent pre-rRNA and work in concert to generate RNA folding, modifications, rearrangements and cleavage as well as targeted degradation of pre-ribosomal RNA by the RNA exosome. Involved in neuronal-lineage cell proliferation. The protein is HEAT repeat-containing protein 1 of Homo sapiens (Human).